The following is a 353-amino-acid chain: Photosystem II D2 protein (353 aa).

Thr-2 bears the N-acetylthreonine mark. Thr-2 is modified (phosphothreonine). Residues 41-61 (CAYFALGGWFTGTTFVTSWYT) traverse the membrane as a helical segment. Residue His-118 participates in chlorophyll a binding. A helical membrane pass occupies residues 125-141 (GFMLRQFELARSVQLRP). Pheophytin a is bound by residues Gln-130 and Asn-143. A helical transmembrane segment spans residues 153–166 (VFVSVFLIYPLGQS). His-198 is a chlorophyll a binding site. Residues 208–228 (AALLCAIHGATVENTLFEDGD) traverse the membrane as a helical segment. A plastoquinone contacts are provided by His-215 and Phe-262. Fe cation is bound at residue His-215. His-269 is a binding site for Fe cation. Residues 279–295 (GLWMSAIGVVGLALNLR) form a helical membrane-spanning segment.

The protein belongs to the reaction center PufL/M/PsbA/D family. PSII is composed of 1 copy each of membrane proteins PsbA, PsbB, PsbC, PsbD, PsbE, PsbF, PsbH, PsbI, PsbJ, PsbK, PsbL, PsbM, PsbT, PsbX, PsbY, PsbZ, Psb30/Ycf12, at least 3 peripheral proteins of the oxygen-evolving complex and a large number of cofactors. It forms dimeric complexes. Requires The D1/D2 heterodimer binds P680, chlorophylls that are the primary electron donor of PSII, and subsequent electron acceptors. It shares a non-heme iron and each subunit binds pheophytin, quinone, additional chlorophylls, carotenoids and lipids. There is also a Cl(-1) ion associated with D1 and D2, which is required for oxygen evolution. The PSII complex binds additional chlorophylls, carotenoids and specific lipids. as cofactor.

The protein resides in the plastid. It is found in the chloroplast thylakoid membrane. The catalysed reaction is 2 a plastoquinone + 4 hnu + 2 H2O = 2 a plastoquinol + O2. Functionally, photosystem II (PSII) is a light-driven water:plastoquinone oxidoreductase that uses light energy to abstract electrons from H(2)O, generating O(2) and a proton gradient subsequently used for ATP formation. It consists of a core antenna complex that captures photons, and an electron transfer chain that converts photonic excitation into a charge separation. The D1/D2 (PsbA/PsbD) reaction center heterodimer binds P680, the primary electron donor of PSII as well as several subsequent electron acceptors. D2 is needed for assembly of a stable PSII complex. The polypeptide is Photosystem II D2 protein (Liriodendron tulipifera (Tuliptree)).